The primary structure comprises 306 residues: Aspartate carbamoyltransferase catalytic subunit (306 aa).

Positions 55 and 56 each coordinate carbamoyl phosphate. An L-aspartate-binding site is contributed by K84. Carbamoyl phosphate is bound by residues R105, H133, and Q136. R166 and R227 together coordinate L-aspartate. 2 residues coordinate carbamoyl phosphate: L265 and P266.

This sequence belongs to the aspartate/ornithine carbamoyltransferase superfamily. ATCase family. In terms of assembly, heterododecamer (2C3:3R2) of six catalytic PyrB chains organized as two trimers (C3), and six regulatory PyrI chains organized as three dimers (R2).

The catalysed reaction is carbamoyl phosphate + L-aspartate = N-carbamoyl-L-aspartate + phosphate + H(+). Its pathway is pyrimidine metabolism; UMP biosynthesis via de novo pathway; (S)-dihydroorotate from bicarbonate: step 2/3. Catalyzes the condensation of carbamoyl phosphate and aspartate to form carbamoyl aspartate and inorganic phosphate, the committed step in the de novo pyrimidine nucleotide biosynthesis pathway. The chain is Aspartate carbamoyltransferase catalytic subunit from Neisseria gonorrhoeae (strain NCCP11945).